The chain runs to 112 residues: MSEELPIKFTDAAADRVKQLIDEEENPELKLRVYVTGGGCSGFQYGFTFDEKANPGDLEIVKNGVMLVVDPMSLQYLVDGEVDYTEGLEGARFFVTNPHATTTCGCGSSFTI.

The iron-sulfur cluster site is built by Cys40, Cys104, and Cys106.

The protein belongs to the HesB/IscA family. As to quaternary structure, homodimer. Iron-sulfur cluster serves as cofactor.

Functionally, required for insertion of 4Fe-4S clusters for at least IspG. This chain is Iron-sulfur cluster insertion protein ErpA, found in Pseudoalteromonas translucida (strain TAC 125).